A 508-amino-acid polypeptide reads, in one-letter code: MSARGTLWGVGLGPGDPELVTVKAARVIGEADVVAYHSAPHGHSIARGIAEPYLRPGQLEEHLVYPVTTEATNHPGGYAGALEDFYADATERIATHLDAGRNVALLAEGDPLFYSSYMHLHTRLTRRFNAVIVPGVTSVSAASAAVATPLVAGDQVLSVLPGTLPVGELTRRLADADAAVVVKLGRSYHNVREALSASGLLGDAFYVERASTAGQRVLPAADVDETSVPYFSLAMLPGGRRRALLTGTVAVVGLGPGDSDWMTPQSRRELAAATDLIGYRGYLDRVEVRDGQRRHPSDNTDEPARARLACSLADQGRAVAVVSSGDPGVFAMATAVLEEAEQWPGVRVRVIPAMTAAQAVASRVGAPLGHDYAVISLSDRLKPWDVIAARLTAAAAADLVLAIYNPASVTRTWQVGAMRELLLAHRDPGIPVVIGRNVSGPVSGPNEDVRVVKLADLNPAEIDMRCLLIVGSSQTRWYSVDSQDRVFTPRRYPEAGRATATKSSRHSD.

The interval 1–243 (MSARGTLWGV…AMLPGGRRRA (243 aa)) is precorrin-2 C20-methyltransferase. The segment at 244–508 (LLTGTVAVVG…TATKSSRHSD (265 aa)) is precorrin-3 methylase. The interval 489–508 (PRRYPEAGRATATKSSRHSD) is disordered.

The protein belongs to the precorrin methyltransferase family.

The enzyme catalyses precorrin-2 + S-adenosyl-L-methionine = precorrin-3A + S-adenosyl-L-homocysteine + H(+). It catalyses the reaction precorrin-3B + S-adenosyl-L-methionine = precorrin-4 + S-adenosyl-L-homocysteine + 3 H(+). The protein operates within cofactor biosynthesis; adenosylcobalamin biosynthesis; cob(II)yrinate a,c-diamide from precorrin-2 (aerobic route): step 1/10. It participates in cofactor biosynthesis; adenosylcobalamin biosynthesis; cob(II)yrinate a,c-diamide from precorrin-2 (aerobic route): step 3/10. Functionally, methylates precorrin-2 at the C-20 position to produce precorrin-3A. The sequence is that of Cobalamin biosynthesis protein CobIJ (cobIJ) from Mycobacterium bovis (strain ATCC BAA-935 / AF2122/97).